Consider the following 267-residue polypeptide: Glutamate 5-kinase (267 aa).

K14 is a binding site for ATP. Residues S54, D141, and N157 each coordinate substrate. Residues 177 to 178 and 219 to 225 contribute to the ATP site; these read SD and TGGMMSK.

Belongs to the glutamate 5-kinase family.

It localises to the cytoplasm. The catalysed reaction is L-glutamate + ATP = L-glutamyl 5-phosphate + ADP. The protein operates within amino-acid biosynthesis; L-proline biosynthesis; L-glutamate 5-semialdehyde from L-glutamate: step 1/2. Its function is as follows. Catalyzes the transfer of a phosphate group to glutamate to form L-glutamate 5-phosphate. The sequence is that of Glutamate 5-kinase from Streptococcus thermophilus (strain CNRZ 1066).